Here is a 134-residue protein sequence, read N- to C-terminus: Putative pre-16S rRNA nuclease (134 aa).

The protein belongs to the YqgF nuclease family.

The protein localises to the cytoplasm. Could be a nuclease involved in processing of the 5'-end of pre-16S rRNA. The chain is Putative pre-16S rRNA nuclease from Helicobacter pylori (strain HPAG1).